Consider the following 53-residue polypeptide: Small ribosomal subunit protein uS14 (53 aa).

Positions 17, 20, 36, and 39 each coordinate Zn(2+).

Belongs to the universal ribosomal protein uS14 family. Zinc-binding uS14 subfamily. As to quaternary structure, part of the 30S ribosomal subunit. Requires Zn(2+) as cofactor.

Functionally, binds 16S rRNA, required for the assembly of 30S particles. The protein is Small ribosomal subunit protein uS14 of Methanocaldococcus jannaschii (strain ATCC 43067 / DSM 2661 / JAL-1 / JCM 10045 / NBRC 100440) (Methanococcus jannaschii).